Reading from the N-terminus, the 276-residue chain is Glutamate racemase (276 aa).

Substrate-binding positions include 9–10 and 41–42; these read DS and YG. Catalysis depends on Cys72, which acts as the Proton donor/acceptor. Position 73-74 (73-74) interacts with substrate; sequence NT. Cys183 serves as the catalytic Proton donor/acceptor. 184-185 contacts substrate; sequence TH.

The protein belongs to the aspartate/glutamate racemases family.

It catalyses the reaction L-glutamate = D-glutamate. Its pathway is cell wall biogenesis; peptidoglycan biosynthesis. Provides the (R)-glutamate required for cell wall biosynthesis. This is Glutamate racemase from Shouchella clausii (strain KSM-K16) (Alkalihalobacillus clausii).